The primary structure comprises 156 residues: Eosinophil cationic protein 2 (156 aa).

Residues 1-25 (MGPKLLESRLCLLLLLGLVLMLASC) form the signal peptide. The active-site Proton acceptor is His38. Disulfide bonds link Cys47–Cys106, Cys61–Cys119, Cys79–Cys134, and Cys86–Cys94. Residue 62 to 66 (KGLNT) coordinates substrate. Asn89, Asn96, and Asn107 each carry an N-linked (GlcNAc...) asparagine glycan. The active-site Proton donor is His151.

Belongs to the pancreatic ribonuclease family.

It is found in the cytoplasmic granule. In terms of biological role, cytotoxin and helminthotoxin with ribonuclease activity. Selectively chemotactic for dendritic cells. Possesses a wide variety of biological activities. The sequence is that of Eosinophil cationic protein 2 (Ear2) from Mus musculus (Mouse).